Reading from the N-terminus, the 214-residue chain is Ribosomal RNA large subunit methyltransferase E (214 aa).

Residues glycine 60, tryptophan 62, aspartate 86, aspartate 102, and aspartate 127 each contribute to the S-adenosyl-L-methionine site. The active-site Proton acceptor is lysine 167.

This sequence belongs to the class I-like SAM-binding methyltransferase superfamily. RNA methyltransferase RlmE family.

It localises to the cytoplasm. It carries out the reaction uridine(2552) in 23S rRNA + S-adenosyl-L-methionine = 2'-O-methyluridine(2552) in 23S rRNA + S-adenosyl-L-homocysteine + H(+). Its function is as follows. Specifically methylates the uridine in position 2552 of 23S rRNA at the 2'-O position of the ribose in the fully assembled 50S ribosomal subunit. This is Ribosomal RNA large subunit methyltransferase E from Herminiimonas arsenicoxydans.